Consider the following 869-residue polypeptide: Mismatch repair endonuclease PMS2 (869 aa).

ATP-binding residues include N44, D69, E108, A109, and L110. The Nuclear localization signal signature appears at 585 to 588 (RRFK).

This sequence belongs to the DNA mismatch repair MutL/HexB family.

It is found in the nucleus. The enzyme catalyses ATP + H2O = ADP + phosphate + H(+). Its function is as follows. Component of the post-replicative DNA mismatch repair system (MMR). Involved in B cell growth by positively regulating B cell proliferation and controlling replication efficiency. Controls cell cycle to prevent re-replication and defects in DNA damage-induced G2 checkpoint. Doesn't seem to counteract or control the immunoglobulin gene conversion (Ig GC) and to contribute to guanine/uracil mismatch repair. Possesses an ATPase activity, but in the absence of gross structural changes, ATP hydrolysis may not be necessary for proficient mismatch repair. The chain is Mismatch repair endonuclease PMS2 from Gallus gallus (Chicken).